A 549-amino-acid chain; its full sequence is Polymorphic pseudokinase ROP5 (549 aa).

The signal sequence occupies residues 1-24; the sequence is MATKLARLATWLVLVGCLLWRAGA. The Protein kinase domain occupies 234–527; it reads LKLVEPLRVG…LEAMETPEFL (294 aa). Residues Arg241, Asp244, Arg245, Ser246, Lys263, Met337, Pro338, Ala340, Asp343, and Asp393 each contribute to the ATP site. Asp244 provides a ligand contact to ADP. Residues Ser246, Lys263, Met337, Pro338, and Ala340 each contribute to the ADP site. Asp393 lines the ADP pocket. Positions 393 and 407 each coordinate Mg(2+). Asn434 carries an N-linked (GlcNAc...) asparagine glycan. Residues Cys458 and Cys492 are joined by a disulfide bond.

The protein belongs to the protein kinase superfamily. Ser/Thr protein kinase family. Component of a complex at least composed of ROP18 and ROP5. Interacts with GRA7. Interacts with ROP17. Interacts with mouse IRGA6/IIGP1; the interaction results in inhibition of IRGA6/IIGP1 GTPase activity and/or oligomerization.

It is found in the secreted. It localises to the parasitophorous vacuole. The protein localises to the cytoplasmic vesicle. The protein resides in the secretory vesicle. Its subcellular location is the rhoptry. Its function is as follows. Pseudokinase. Essential for virulence in the type I lineage. Mediates parasite survival in mouse monocytes. Required for the parasite ability to resist mouse innate immune effectors triggered by the IFN-gamma (IFNG). Reduces the accumulation of mouse IRGA6 (IIGP1) and IRGB6 (TGTP1/TGTP2), immunity-related GTPases (IRGs) that protect mice from infection by certain intracellular pathogens, on the parasitophorous vacuole and IRG-mediated killing of parasites by mouse cells. Regulates the activity of ROP18, an active kinase that targets IRGs to prevent IRG-mediated parasite killing by mouse cells. Acts as an allosteric inhibitor of mouse IRGA6 (IIGP1). Does not affect IFN-gamma (IFNG)-mediated parasite killing in human cells that do not possess the large variety of IRGs. This chain is Polymorphic pseudokinase ROP5, found in Toxoplasma gondii.